Here is a 269-residue protein sequence, read N- to C-terminus: Shikimate dehydrogenase (NADP(+)) (269 aa).

Residues 17 to 19 and T64 each bind shikimate; that span reads SKS. The active-site Proton acceptor is the K68. NADP(+) is bound at residue E80. Shikimate-binding residues include N89 and D105. Residues 130–134, 154–159, and M213 each bind NADP(+); these read GAGGA and NRTHAK. A shikimate-binding site is contributed by Y215. Residue G237 coordinates NADP(+).

It belongs to the shikimate dehydrogenase family. Homodimer.

The enzyme catalyses shikimate + NADP(+) = 3-dehydroshikimate + NADPH + H(+). Its pathway is metabolic intermediate biosynthesis; chorismate biosynthesis; chorismate from D-erythrose 4-phosphate and phosphoenolpyruvate: step 4/7. In terms of biological role, involved in the biosynthesis of the chorismate, which leads to the biosynthesis of aromatic amino acids. Catalyzes the reversible NADPH linked reduction of 3-dehydroshikimate (DHSA) to yield shikimate (SA). In Neisseria pharyngis, this protein is Shikimate dehydrogenase (NADP(+)).